The sequence spans 214 residues: rRNA methyltransferase 2, mitochondrial (214 aa).

A mitochondrion-targeting transit peptide spans 1–18; that stretch reads MFSTKKSQGNLHKYIQRQ. S-adenosyl-L-methionine-binding positions include 63 to 66, Asp-83, 100 to 101, and Asp-125; these read PGSW and DI. The active-site Proton acceptor is the Lys-169.

Belongs to the class I-like SAM-binding methyltransferase superfamily. RNA methyltransferase RlmE family.

The protein resides in the mitochondrion. The catalysed reaction is a uridine in rRNA + S-adenosyl-L-methionine = a 2'-O-methyluridine in rRNA + S-adenosyl-L-homocysteine + H(+). In terms of biological role, S-adenosyl-L-methionine-dependent 2'-O-ribose methyltransferase that catalyzes the formation of 2'-O-methyluridine at position 808 (Um808) in the mitochondrial large subunit ribosomal RNA (mtLSU rRNA), a universally conserved modification in the peptidyl transferase domain of the mtLSU rRNA. This activity may require prior 2'-O-methylguanosine modification at position 809 (Gm809) by MRM3. Essential for late-stage assembly of mtLSU required for efficient translation of mitochondrial DNA encoded proteins; methyltransferase activity is not required for this function. Essential for mitochondrial respiratory function. The chain is rRNA methyltransferase 2, mitochondrial from Caenorhabditis elegans.